A 161-amino-acid chain; its full sequence is MLTHLDSQGRANMVDVTDKAVTSREAVAEALVRMLPATLQMIVSGGHPKGDVFAVARIAGIQAAKKTSDLIPLCHPLMLTSIKVHLAAEGDNAVRITASCKLSGQTGVEMEALTAASIAALTIYDMCKAVDRGMVIESVRLLEKLGGKSGHFIADDAQVAP.

Substrate is bound by residues 73–75 (LCH) and 110–111 (ME). Aspartate 125 is an active-site residue.

This sequence belongs to the MoaC family. Homohexamer; trimer of dimers.

It catalyses the reaction (8S)-3',8-cyclo-7,8-dihydroguanosine 5'-triphosphate = cyclic pyranopterin phosphate + diphosphate. It functions in the pathway cofactor biosynthesis; molybdopterin biosynthesis. In terms of biological role, catalyzes the conversion of (8S)-3',8-cyclo-7,8-dihydroguanosine 5'-triphosphate to cyclic pyranopterin monophosphate (cPMP). This Pseudomonas syringae pv. tomato (strain ATCC BAA-871 / DC3000) protein is Cyclic pyranopterin monophosphate synthase.